Reading from the N-terminus, the 86-residue chain is Venom metalloproteinase (86 aa).

D7 contacts Ca(2+). Position 67 (H67) interacts with Zn(2+). E68 is a catalytic residue. Residues H71 and H77 each coordinate Zn(2+).

It belongs to the venom metalloproteinase (M12B) family. It depends on Zn(2+) as a cofactor. As to expression, expressed by the venom gland.

The protein localises to the secreted. This is Venom metalloproteinase from Tityus serrulatus (Brazilian scorpion).